The chain runs to 194 residues: Protein GrpE (194 aa).

The tract at residues 1–44 is disordered; sequence MAEEKQNEELNEQEELNETEAETAEAEQTAAEADAPAEETQTEM. Over residues 9 to 25 the composition is skewed to acidic residues; sequence ELNEQEELNETEAETAE.

It belongs to the GrpE family. Homodimer.

The protein localises to the cytoplasm. Its function is as follows. Participates actively in the response to hyperosmotic and heat shock by preventing the aggregation of stress-denatured proteins, in association with DnaK and GrpE. It is the nucleotide exchange factor for DnaK and may function as a thermosensor. Unfolded proteins bind initially to DnaJ; upon interaction with the DnaJ-bound protein, DnaK hydrolyzes its bound ATP, resulting in the formation of a stable complex. GrpE releases ADP from DnaK; ATP binding to DnaK triggers the release of the substrate protein, thus completing the reaction cycle. Several rounds of ATP-dependent interactions between DnaJ, DnaK and GrpE are required for fully efficient folding. The protein is Protein GrpE of Bacillus licheniformis (strain ATCC 14580 / DSM 13 / JCM 2505 / CCUG 7422 / NBRC 12200 / NCIMB 9375 / NCTC 10341 / NRRL NRS-1264 / Gibson 46).